The primary structure comprises 410 residues: E3 ubiquitin-protein ligase PRT1 (410 aa).

RING-type zinc fingers lie at residues 26-66 (CCVC…PICR) and 192-232 (CSAC…QECN). The ZZ-type zinc-finger motif lies at 306-370 (HFGAGCDSCG…RLELARSPQV (65 aa)). Positions 311, 314, 326, 329, 338, 341, 356, and 360 each coordinate Zn(2+). The segment at 385–410 (ISNEGMDTDEGEEGPPGSSNESSSTE) is disordered. Residues 399 to 410 (PPGSSNESSSTE) show a composition bias toward low complexity.

It localises to the cytoplasm. The enzyme catalyses S-ubiquitinyl-[E2 ubiquitin-conjugating enzyme]-L-cysteine + [acceptor protein]-L-lysine = [E2 ubiquitin-conjugating enzyme]-L-cysteine + N(6)-ubiquitinyl-[acceptor protein]-L-lysine.. It participates in protein modification; protein ubiquitination. Its function is as follows. E3 ubiquitin-protein ligase that mediates ubiquitination and subsequent proteasomal degradation of target proteins. Functions in the N-end rule pathway of protein degradation, where it specifically recognizes and ubiquitinates proteins with a N-terminal bulky aromatic amino acid (Phe). Does not act on aliphatic hydrophobic and basic N-terminal residues (Arg or Leu) containing proteins. This is E3 ubiquitin-protein ligase PRT1 (PRT1) from Arabidopsis thaliana (Mouse-ear cress).